Reading from the N-terminus, the 377-residue chain is UPF0754 membrane protein lwe2241 (377 aa).

Helical transmembrane passes span 1 to 21 and 357 to 377; these read MSVL…GAMT and YLGG…AIWI.

It belongs to the UPF0754 family.

The protein resides in the cell membrane. In Listeria welshimeri serovar 6b (strain ATCC 35897 / DSM 20650 / CCUG 15529 / CIP 8149 / NCTC 11857 / SLCC 5334 / V8), this protein is UPF0754 membrane protein lwe2241.